The sequence spans 266 residues: Vitamin B12-binding protein (266 aa).

Positions 1 to 22 are cleaved as a signal peptide; sequence MAKSLFRALVALSFLAPLWLNA. Residues 25 to 266 enclose the Fe/B12 periplasmic-binding domain; the sequence is RVITLSPANT…QLCNALSQVD (242 aa). Cyanocob(III)alamin is bound by residues Y50 and 242-246; that span reads DWFER. An intrachain disulfide couples C183 to C259.

It belongs to the BtuF family. The complex is composed of two ATP-binding proteins (BtuD), two transmembrane proteins (BtuC) and a solute-binding protein (BtuF).

The protein resides in the periplasm. Part of the ABC transporter complex BtuCDF involved in vitamin B12 import. Binds vitamin B12 and delivers it to the periplasmic surface of BtuC. This is Vitamin B12-binding protein from Escherichia coli O6:H1 (strain CFT073 / ATCC 700928 / UPEC).